The chain runs to 119 residues: NLYQFKNMIHCTVPNRSWWHFANYGCYCGRGGSGTPVDDLDRCCQIHDNCYGEAEKISGCWPYIKTYTYDSCQGTLTSCGAANNCAASVCDCDRVAANCFARAPYIDKNYNIDFNARCQ.

Intrachain disulfides connect Cys11–Cys72, Cys26–Cys118, Cys28–Cys44, Cys43–Cys99, Cys50–Cys92, Cys60–Cys85, and Cys79–Cys90. Tyr27, Gly29, and Gly31 together coordinate Ca(2+). The active site involves His47. Residue Asp48 participates in Ca(2+) binding. The active site involves Asp93.

Belongs to the phospholipase A2 family. Group I subfamily. D49 sub-subfamily. The cofactor is Ca(2+). In terms of tissue distribution, expressed by the venom gland.

It is found in the secreted. It carries out the reaction a 1,2-diacyl-sn-glycero-3-phosphocholine + H2O = a 1-acyl-sn-glycero-3-phosphocholine + a fatty acid + H(+). PLA2 catalyzes the calcium-dependent hydrolysis of the 2-acyl groups in 3-sn-phosphoglycerides. The protein is Acidic phospholipase A2 DE-III of Naja melanoleuca (Forest cobra).